Consider the following 105-residue polypeptide: Large ribosomal subunit protein uL24 (105 aa).

Belongs to the universal ribosomal protein uL24 family. Part of the 50S ribosomal subunit.

In terms of biological role, one of two assembly initiator proteins, it binds directly to the 5'-end of the 23S rRNA, where it nucleates assembly of the 50S subunit. One of the proteins that surrounds the polypeptide exit tunnel on the outside of the subunit. This chain is Large ribosomal subunit protein uL24, found in Chromohalobacter salexigens (strain ATCC BAA-138 / DSM 3043 / CIP 106854 / NCIMB 13768 / 1H11).